Here is a 131-residue protein sequence, read N- to C-terminus: Translation initiation factor 5A (131 aa).

At Lys-36 the chain carries Hypusine.

It belongs to the eIF-5A family.

The protein resides in the cytoplasm. Functionally, functions by promoting the formation of the first peptide bond. The sequence is that of Translation initiation factor 5A from Sulfurisphaera tokodaii (strain DSM 16993 / JCM 10545 / NBRC 100140 / 7) (Sulfolobus tokodaii).